Here is a 385-residue protein sequence, read N- to C-terminus: Chaperone protein DnaJ (385 aa).

The J domain maps to 5–70; that stretch reads DFYEVLGVSR…QKKAAYDQYG (66 aa). A CR-type zinc finger spans residues 137 to 214; it reads GVSKEIEVPT…CHGQGRKQKT (78 aa). Zn(2+)-binding residues include Cys150, Cys153, Cys167, Cys170, Cys189, Cys192, Cys202, and Cys205. CXXCXGXG motif repeat units follow at residues 150–157, 167–174, 189–196, and 202–209; these read CDTCDGSG, CGTCHGHG, CPTCHGKG, and CNECHGQG.

The protein belongs to the DnaJ family. Homodimer. The cofactor is Zn(2+).

Its subcellular location is the cytoplasm. Functionally, participates actively in the response to hyperosmotic and heat shock by preventing the aggregation of stress-denatured proteins and by disaggregating proteins, also in an autonomous, DnaK-independent fashion. Unfolded proteins bind initially to DnaJ; upon interaction with the DnaJ-bound protein, DnaK hydrolyzes its bound ATP, resulting in the formation of a stable complex. GrpE releases ADP from DnaK; ATP binding to DnaK triggers the release of the substrate protein, thus completing the reaction cycle. Several rounds of ATP-dependent interactions between DnaJ, DnaK and GrpE are required for fully efficient folding. Also involved, together with DnaK and GrpE, in the DNA replication of plasmids through activation of initiation proteins. In Vibrio harveyi (Beneckea harveyi), this protein is Chaperone protein DnaJ.